Here is a 65-residue protein sequence, read N- to C-terminus: DNA gyrase inhibitor YacG (65 aa).

Zn(2+)-binding residues include cysteine 9, cysteine 12, cysteine 28, and cysteine 32. Positions 45-65 (KRIPSSGDLSESDDWSEEPKQ) are disordered. Acidic residues predominate over residues 54–65 (SESDDWSEEPKQ).

It belongs to the DNA gyrase inhibitor YacG family. Interacts with GyrB. Zn(2+) is required as a cofactor.

Functionally, inhibits all the catalytic activities of DNA gyrase by preventing its interaction with DNA. Acts by binding directly to the C-terminal domain of GyrB, which probably disrupts DNA binding by the gyrase. The sequence is that of DNA gyrase inhibitor YacG from Shigella boydii serotype 18 (strain CDC 3083-94 / BS512).